The sequence spans 294 residues: Probable 2-(5''-triphosphoribosyl)-3'-dephosphocoenzyme-A synthase (294 aa).

This sequence belongs to the CitG/MdcB family.

The catalysed reaction is 3'-dephospho-CoA + ATP = 2'-(5''-triphospho-alpha-D-ribosyl)-3'-dephospho-CoA + adenine. The polypeptide is Probable 2-(5''-triphosphoribosyl)-3'-dephosphocoenzyme-A synthase (Streptococcus pyogenes serotype M2 (strain MGAS10270)).